A 1048-amino-acid chain; its full sequence is Protein argonaute 7 (1048 aa).

A compositionally biased stretch (basic and acidic residues) spans 1 to 14 (MEGEREGVVAKNED). 2 disordered regions span residues 1 to 50 (MEGE…GSSG) and 121 to 141 (KAADAAPRGSMWKHRPSKKPP). Positions 16-37 (AGGGGGGLGTGGNGGGGGGGSA) are enriched in gly residues. Over residues 131 to 141 (MWKHRPSKKPP) the composition is skewed to basic residues. The 109-residue stretch at 422-530 (KRCDFLKDLP…VPMELCVVCE (109 aa)) folds into the PAZ domain. The region spanning 709–1017 (LLICVMERRH…AAYRGRLYLE (309 aa)) is the Piwi domain.

It belongs to the argonaute family. Ago subfamily. As to expression, expressed in the reproductive shoot apex.

In terms of biological role, involved in the RNA silencing pathway. May bind to short RNAs such as microRNAs (miRNAs) or short interfering RNAs (siRNAs), and represses the translation of mRNAs which are complementary to them. Regulates shoot apical meristem (SAM) initiation and maintenance and leaf polarization through the trans-acting siRNAS (ta-siRNAs) pathway which probably modulates the expression of the ARF2, ARF3, ARF4, ARF14 and ARF15 genes. The chain is Protein argonaute 7 (AGO7) from Oryza sativa subsp. japonica (Rice).